A 246-amino-acid polypeptide reads, in one-letter code: 1-(5-phosphoribosyl)-5-[(5-phosphoribosylamino)methylideneamino] imidazole-4-carboxamide isomerase (246 aa).

Asp7 acts as the Proton acceptor in catalysis. Asp129 (proton donor) is an active-site residue.

Belongs to the HisA/HisF family.

It is found in the cytoplasm. It carries out the reaction 1-(5-phospho-beta-D-ribosyl)-5-[(5-phospho-beta-D-ribosylamino)methylideneamino]imidazole-4-carboxamide = 5-[(5-phospho-1-deoxy-D-ribulos-1-ylimino)methylamino]-1-(5-phospho-beta-D-ribosyl)imidazole-4-carboxamide. Its pathway is amino-acid biosynthesis; L-histidine biosynthesis; L-histidine from 5-phospho-alpha-D-ribose 1-diphosphate: step 4/9. This Buchnera aphidicola subsp. Acyrthosiphon pisum (strain Tuc7) protein is 1-(5-phosphoribosyl)-5-[(5-phosphoribosylamino)methylideneamino] imidazole-4-carboxamide isomerase.